The sequence spans 250 residues: Prolactin-7A2 (250 aa).

A signal peptide spans 1–29 (MQLSFSRPRPWTLLLMVVSNLLLWENVSS). 4 N-linked (GlcNAc...) asparagine glycosylation sites follow: Asn-26, Asn-35, Asn-102, and Asn-134. 2 cysteine pairs are disulfide-bonded: Cys-100–Cys-215 and Cys-232–Cys-241.

It belongs to the somatotropin/prolactin family. In terms of tissue distribution, expression restricted to placental tissues. Trophoblast giant cells are found to be the major source.

It localises to the secreted. The protein is Prolactin-7A2 (Prl7a2) of Rattus norvegicus (Rat).